Consider the following 349-residue polypeptide: sn-glycerol-3-phosphate import ATP-binding protein UgpC (349 aa).

Residues 4-235 (VTLTAVRKVY…PASTFVASFM (232 aa)) form the ABC transporter domain. 37 to 44 (GPSGCGKS) is a binding site for ATP.

The protein belongs to the ABC transporter superfamily. sn-glycerol-3-phosphate importer (TC 3.A.1.1.3) family. The complex is composed of two ATP-binding proteins (UgpC), two transmembrane proteins (UgpA and UgpE) and a solute-binding protein (UgpB).

Its subcellular location is the cell inner membrane. The enzyme catalyses sn-glycerol 3-phosphate(out) + ATP + H2O = sn-glycerol 3-phosphate(in) + ADP + phosphate + H(+). Functionally, part of the ABC transporter complex UgpBAEC involved in sn-glycerol-3-phosphate (G3P) import. Responsible for energy coupling to the transport system. In Jannaschia sp. (strain CCS1), this protein is sn-glycerol-3-phosphate import ATP-binding protein UgpC.